Reading from the N-terminus, the 537-residue chain is CTP synthase (537 aa).

Positions 1–265 (MTKFIFVTGG…GKYLIKRLKL (265 aa)) are amidoligase domain. Residue Ser-13 participates in CTP binding. Ser-13 serves as a coordination point for UTP. ATP is bound at residue 14-19 (GLGKGI). Tyr-54 contacts L-glutamine. Asp-71 contributes to the ATP binding site. Mg(2+) contacts are provided by Asp-71 and Glu-139. Residues 146 to 148 (DIE), 186 to 191 (KTKPTQ), and Lys-222 each bind CTP. Residues 186-191 (KTKPTQ) and Lys-222 each bind UTP. Residues 290-532 (EIAIVGKYVK…VRAAKEYKQE (243 aa)) form the Glutamine amidotransferase type-1 domain. L-glutamine is bound at residue Gly-351. The active-site Nucleophile; for glutamine hydrolysis is the Cys-378. L-glutamine contacts are provided by residues 379 to 382 (FGFQ), Glu-402, and Arg-459. Catalysis depends on residues His-505 and Glu-507.

This sequence belongs to the CTP synthase family. As to quaternary structure, homotetramer.

The catalysed reaction is UTP + L-glutamine + ATP + H2O = CTP + L-glutamate + ADP + phosphate + 2 H(+). It carries out the reaction L-glutamine + H2O = L-glutamate + NH4(+). It catalyses the reaction UTP + NH4(+) + ATP = CTP + ADP + phosphate + 2 H(+). Its pathway is pyrimidine metabolism; CTP biosynthesis via de novo pathway; CTP from UDP: step 2/2. Its activity is regulated as follows. Allosterically activated by GTP, when glutamine is the substrate; GTP has no effect on the reaction when ammonia is the substrate. The allosteric effector GTP functions by stabilizing the protein conformation that binds the tetrahedral intermediate(s) formed during glutamine hydrolysis. Inhibited by the product CTP, via allosteric rather than competitive inhibition. Functionally, catalyzes the ATP-dependent amination of UTP to CTP with either L-glutamine or ammonia as the source of nitrogen. Regulates intracellular CTP levels through interactions with the four ribonucleotide triphosphates. The protein is CTP synthase of Pyrococcus horikoshii (strain ATCC 700860 / DSM 12428 / JCM 9974 / NBRC 100139 / OT-3).